The primary structure comprises 1198 residues: Structural polyprotein (1198 aa).

The segment at 2–15 (TKKPGGPGKNRAIN) is interaction with host EXOC1. Residues 2–109 (TKKPGGPGKN…RKQNKRGGNE (108 aa)) are Cytoplasmic-facing. A hydrophobic; homodimerization of capsid protein C region spans residues 37 to 72 (LLDGRGPVRFVLALITFFKFTALAPTKALLGRWKAV). A propeptide spans 106–127 (GGNEGSIMWLASLAVVIAYAGA) (ER anchor for the capsid protein C, removed in mature form by serine protease NS3). Residues 110-130 (GSIMWLASLAVVIAYAGAMKL) form a helical membrane-spanning segment. Topologically, residues 131–253 (SNFQGKLLMT…ATRYLMKTEN (123 aa)) are extracellular. Asparagine 142 carries an N-linked (GlcNAc...) asparagine; by host glycan. A helical transmembrane segment spans residues 254–274 (WIIRNPGYAFLAATLGWMLGS). At 275–279 (NNGQR) the chain is on the cytoplasmic side. A helical membrane pass occupies residues 280–294 (VVFTILLLLVAPAYS). The Extracellular segment spans residues 295–746 (FNCLGMGNRD…QVFGGAFRTL (452 aa)). 6 cysteine pairs are disulfide-bonded: cysteine 297–cysteine 324, cysteine 354–cysteine 410, cysteine 354–cysteine 415, cysteine 368–cysteine 399, cysteine 386–cysteine 410, and cysteine 386–cysteine 415. Positions 392 to 405 (DRGWGNGCGLFGKG) are fusion peptide. Asparagine 448 carries N-linked (GlcNAc...) asparagine; by host glycosylation. Disulfide bonds link cysteine 484/cysteine 581 and cysteine 598/cysteine 629. Residues 747–767 (FGGMSWITQGLMGALLLWMGV) form a helical membrane-spanning segment. The Cytoplasmic segment spans residues 768–773 (NARDRS). The chain crosses the membrane as a helical span at residues 774 to 794 (IALAFLATGGVLVFLATNVHA). The Extracellular segment spans residues 795–1198 (DTGCAIDITR…CADAWGHHLH (404 aa)). 6 cysteine pairs are disulfide-bonded: cysteine 798/cysteine 809, cysteine 849/cysteine 937, cysteine 973/cysteine 1017, cysteine 1074/cysteine 1123, cysteine 1085/cysteine 1106, and cysteine 1107/cysteine 1110. N-linked (GlcNAc...) asparagine; by host glycosylation is found at asparagine 924 and asparagine 1001. The segment at 1152 to 1177 (VDPFSAGPSGDVSGHPGGPSQEVDGQ) is disordered.

Homodimer. Interacts (via N-terminus) with host EXOC1 (via C-terminus); this interaction results in EXOC1 degradation through the proteasome degradation pathway. Interacts with host CAPRIN1; this interaction is involved in the suppression of the integrated stress response. In terms of assembly, forms heterodimers with envelope protein E in the endoplasmic reticulum and Golgi. As to quaternary structure, homodimer; in the endoplasmic reticulum and Golgi. Interacts with protein prM. Interacts with non-structural protein 1. Post-translationally, genome polyprotein: Specific enzymatic cleavages in vivo yield mature proteins. Cleavages in the lumen of endoplasmic reticulum are performed by host signal peptidase, whereas cleavages in the cytoplasmic side are performed by serine protease NS3. Signal cleavage at the 2K-4B site requires a prior NS3 protease-mediated cleavage at the 4A-2K site. In terms of processing, cleaved in post-Golgi vesicles by a host furin, releasing the mature small envelope protein M, and peptide pr. This cleavage is incomplete as up to 30% of viral particles still carry uncleaved prM. N-glycosylated.

It localises to the secreted. The protein localises to the virion membrane. Its subcellular location is the host endoplasmic reticulum membrane. Its function is as follows. Plays a role in virus budding by binding to the cell membrane and gathering the viral RNA into a nucleocapsid that forms the core of a mature virus particle. During virus entry, may induce genome penetration into the host cytoplasm after hemifusion induced by the surface proteins. Can migrate to the cell nucleus where it modulates host functions. Overcomes the anti-viral effects of host EXOC1 by sequestering and degrading the latter through the proteasome degradation pathway. Inhibits the integrated stress response (ISR) in the infected cell by binding to host CAPRIN1. Inhibits RNA silencing by interfering with host Dicer. Functionally, prevents premature fusion activity of envelope proteins in trans-Golgi by binding to envelope protein E at pH6.0. After virion release in extracellular space, gets dissociated from E dimers. In terms of biological role, acts as a chaperone for envelope protein E during intracellular virion assembly by masking and inactivating envelope protein E fusion peptide. prM is the only viral peptide matured by host furin in the trans-Golgi network probably to avoid catastrophic activation of the viral fusion activity in acidic Golgi compartment prior to virion release. prM-E cleavage is inefficient, and many virions are only partially matured. These uncleaved prM would play a role in immune evasion. Its function is as follows. May play a role in virus budding. Exerts cytotoxic effects by activating a mitochondrial apoptotic pathway through M ectodomain. May display a viroporin activity. Binds to host cell surface receptor and mediates fusion between viral and cellular membranes. Envelope protein is synthesized in the endoplasmic reticulum in the form of heterodimer with protein prM. They play a role in virion budding in the ER, and the newly formed immature particle is covered with 60 spikes composed of heterodimer between precursor prM and envelope protein E. The virion is transported to the Golgi apparatus where the low pH causes dissociation of PrM-E heterodimers and formation of E homodimers. prM-E cleavage is inefficient, and many virions are only partially matured. These uncleaved prM would play a role in immune evasion. Functionally, may play a role in neuroinvasiveness. In Japanese encephalitis virus (strain Jaoars982) (JEV), this protein is Structural polyprotein.